Consider the following 520-residue polypeptide: MSTYSKKTSYTVKSSSSGSIPRNFSSLSYSGPSMSRQSYSARSSYGGVNRGMGAGMGGGSGFISSSSAYGLGMGMGTGMGAGVVAPIQAVTVNKSLLAPLNLEIDPNIQIVRTQEKEQIKTLNNRFASFIDKVRFLEQQNKMLETKWSLLQNQTATRSNIDAMFEAYIANLRRQLDSLGNDKMKLEADLHNMQGLVEDFKNKYEDEINKRTECENEFVLIKKDVDEAYMNKVELEAKLESLTDEINFLRQIFEEEIRELQSQIKDTSVVVEMDNSRNLDMDAIVAEVRAQYEDIANRSRAEAEMWYKSKYEEMQTSANKYGDDLRSTKTEIADLNRMIQRLQSEIDAVKGQRANLENQIAEAEERGEMAVRDAKGRIKDLEDALQRAKQDMARQIREYQDLMNVKLALDIEIATYRKLLEGEEDRLATGIKAINISKQSTSYGGYPMESAGSSYSTYSSGYSSGLSGGYGGGYSGGYSGGYSSGSGYSDTVSQTKKSVVIKMIETKDGRVVSESSEVVQD.

Low complexity predominate over residues 1–19 (MSTYSKKTSYTVKSSSSGS). The segment at 1-20 (MSTYSKKTSYTVKSSSSGSI) is disordered. Residues 2–114 (STYSKKTSYT…DPNIQIVRTQ (113 aa)) are head. Ser-28 is subject to Phosphoserine. The segment at 115–150 (EKEQIKTLNNRFASFIDKVRFLEQQNKMLETKWSLL) is coil 1A. Residues 115 to 426 (EKEQIKTLNN…KLLEGEEDRL (312 aa)) form the IF rod domain. The tract at residues 151–166 (QNQTATRSNIDAMFEA) is linker 1. The interval 168–259 (IANLRRQLDS…QIFEEEIREL (92 aa)) is coil 1B. The tract at residues 260–283 (QSQIKDTSVVVEMDNSRNLDMDAI) is linker 12. The interval 284–422 (VAEVRAQYED…ATYRKLLEGE (139 aa)) is coil 2. Residues 423–520 (EDRLATGIKA…VSESSEVVQD (98 aa)) are tail.

The protein belongs to the intermediate filament family. As to quaternary structure, heterotetramer of two type I and two type II keratins. Keratin-8 associates with keratin-18. Expressed in simple epithelia.

It is found in the cytoplasm. The protein resides in the nucleus. The protein localises to the nucleoplasm. It localises to the nucleus matrix. In terms of biological role, together with KRT19, helps to link the contractile apparatus to dystrophin at the costameres of striated muscle. This chain is Keratin, type II cytoskeletal 8, found in Danio rerio (Zebrafish).